The following is a 457-amino-acid chain: Chromosomal replication initiator protein DnaA (457 aa).

The domain I, interacts with DnaA modulators stretch occupies residues 1–75; the sequence is MDAQLNNLWE…ALKIVTSRKF (75 aa). Positions 75-118 are domain II; the sequence is FKIEFYLESDLEEEKENEEKQKEEKKDNTNDVDGSIVVSDEMSA. Residues 87–108 are disordered; that stretch reads EEKENEEKQKEEKKDNTNDVDG. Residues 91 to 103 are compositionally biased toward basic and acidic residues; sequence NEEKQKEEKKDNT. The domain III, AAA+ region stretch occupies residues 119-335; that stretch reads TLNPKYTFQS…GALIRIIAYS (217 aa). ATP contacts are provided by glycine 163, glycine 165, lysine 166, and threonine 167. Residues 336-457 are domain IV, binds dsDNA; sequence SLTNRDVSVD…NDITKKLTQK (122 aa).

This sequence belongs to the DnaA family. As to quaternary structure, oligomerizes as a right-handed, spiral filament on DNA at oriC.

It localises to the cytoplasm. Plays an essential role in the initiation and regulation of chromosomal replication. ATP-DnaA binds to the origin of replication (oriC) to initiate formation of the DNA replication initiation complex once per cell cycle. Binds the DnaA box (a 9 base pair repeat at the origin) and separates the double-stranded (ds)DNA. Forms a right-handed helical filament on oriC DNA; dsDNA binds to the exterior of the filament while single-stranded (ss)DNA is stabiized in the filament's interior. The ATP-DnaA-oriC complex binds and stabilizes one strand of the AT-rich DNA unwinding element (DUE), permitting loading of DNA polymerase. After initiation quickly degrades to an ADP-DnaA complex that is not apt for DNA replication. Binds acidic phospholipids. This chain is Chromosomal replication initiator protein DnaA, found in Clostridium perfringens (strain SM101 / Type A).